The chain runs to 421 residues: Gamma-glutamyl phosphate reductase (421 aa).

This sequence belongs to the gamma-glutamyl phosphate reductase family.

The protein resides in the cytoplasm. It carries out the reaction L-glutamate 5-semialdehyde + phosphate + NADP(+) = L-glutamyl 5-phosphate + NADPH + H(+). It functions in the pathway amino-acid biosynthesis; L-proline biosynthesis; L-glutamate 5-semialdehyde from L-glutamate: step 2/2. Catalyzes the NADPH-dependent reduction of L-glutamate 5-phosphate into L-glutamate 5-semialdehyde and phosphate. The product spontaneously undergoes cyclization to form 1-pyrroline-5-carboxylate. The polypeptide is Gamma-glutamyl phosphate reductase (Pseudomonas aeruginosa (strain UCBPP-PA14)).